The chain runs to 390 residues: L-serine phosphate decarboxylase Cj1436c (390 aa).

Lysine 243 is modified (N6-(pyridoxal phosphate)lysine).

Belongs to the class-I pyridoxal-phosphate-dependent aminotransferase family. It depends on pyridoxal 5'-phosphate as a cofactor.

It carries out the reaction O-phospho-L-serine + H(+) = phosphoethanolamine + CO2. Its pathway is capsule biogenesis; capsule polysaccharide biosynthesis. Its function is as follows. Pyridoxal phosphate (PLP)-dependent decarboxylase involved in the biosynthesis of amidated D-glucuronic acid structures found on the capsular polysaccharide (CPS) of C.jejuni. Catalyzes the decarboxylation of L-serine phosphate to ethanolamine phosphate. Less active with L-threonine phosphate. No activity with L-serine, L-threonine, L-aspartate or L-glutamate. This is L-serine phosphate decarboxylase Cj1436c from Campylobacter jejuni subsp. jejuni serotype O:2 (strain ATCC 700819 / NCTC 11168).